Consider the following 549-residue polypeptide: Glucose-6-phosphate isomerase (549 aa).

The active-site Proton donor is Glu-353. Catalysis depends on residues His-384 and Lys-513.

This sequence belongs to the GPI family.

The protein resides in the cytoplasm. The catalysed reaction is alpha-D-glucose 6-phosphate = beta-D-fructose 6-phosphate. Its pathway is carbohydrate biosynthesis; gluconeogenesis. It functions in the pathway carbohydrate degradation; glycolysis; D-glyceraldehyde 3-phosphate and glycerone phosphate from D-glucose: step 2/4. Functionally, catalyzes the reversible isomerization of glucose-6-phosphate to fructose-6-phosphate. This chain is Glucose-6-phosphate isomerase, found in Brucella suis (strain ATCC 23445 / NCTC 10510).